The chain runs to 240 residues: Ribonuclease 3 (240 aa).

Positions 4–134 (SRQPLLDALG…LLGAIYLQHG (131 aa)) constitute an RNase III domain. Position 44 (E44) interacts with Mg(2+). D48 is an active-site residue. D120 and E123 together coordinate Mg(2+). E123 is an active-site residue. A DRBM domain is found at 161-229 (DWKTSLQELT…AAAAWKALEV (69 aa)).

This sequence belongs to the ribonuclease III family. Homodimer. Mg(2+) is required as a cofactor.

Its subcellular location is the cytoplasm. The catalysed reaction is Endonucleolytic cleavage to 5'-phosphomonoester.. Its function is as follows. Digests double-stranded RNA. Involved in the processing of primary rRNA transcript to yield the immediate precursors to the large and small rRNAs (23S and 16S). Processes some mRNAs, and tRNAs when they are encoded in the rRNA operon. Processes pre-crRNA and tracrRNA of type II CRISPR loci if present in the organism. The protein is Ribonuclease 3 of Mycobacterium bovis (strain ATCC BAA-935 / AF2122/97).